The sequence spans 636 residues: Amylosucrase (636 aa).

The substrate site is built by aspartate 152, histidine 195, glutamine 262, and arginine 292. Aspartate 294 serves as the catalytic Nucleophile. Glutamate 336 serves as the catalytic Proton donor. Substrate contacts are provided by histidine 400, aspartate 401, and arginine 517.

It belongs to the glycosyl hydrolase 13 family. As to quaternary structure, monomer.

The protein resides in the secreted. The enzyme catalyses [(1-&gt;4)-alpha-D-glucosyl](n) + sucrose = [(1-&gt;4)-alpha-D-glucosyl](n+1) + D-fructose. With respect to regulation, amylosucrase favors hydrolysis at low sucrose concentrations, and polymerization at high sucrose concentrations. Competitively inhibited by fructose. In terms of biological role, catalyzes the synthesis of alpha-glucan from sucrose. Catalyzes, in addition, sucrose hydrolysis, maltose and maltotriose synthesis by successive transfers of the glucosyl moiety of sucrose onto the released glucose, and finally turanose and trehalulose synthesis, these two sucrose isomers being obtained by glucosyl transfer onto fructose. The polypeptide is Amylosucrase (ams) (Neisseria polysaccharea).